The following is a 97-amino-acid chain: Exodeoxyribonuclease 7 small subunit (97 aa).

Positions 1–22 (MAKTASPGATPPGNGTEPLPDN) are disordered.

The protein belongs to the XseB family. As to quaternary structure, heterooligomer composed of large and small subunits.

The protein localises to the cytoplasm. The enzyme catalyses Exonucleolytic cleavage in either 5'- to 3'- or 3'- to 5'-direction to yield nucleoside 5'-phosphates.. In terms of biological role, bidirectionally degrades single-stranded DNA into large acid-insoluble oligonucleotides, which are then degraded further into small acid-soluble oligonucleotides. This is Exodeoxyribonuclease 7 small subunit from Burkholderia cenocepacia (strain HI2424).